The chain runs to 257 residues: tRNA (guanine-N(1)-)-methyltransferase (257 aa).

S-adenosyl-L-methionine-binding positions include Gly117 and 137–142; that span reads LGDFVL.

This sequence belongs to the RNA methyltransferase TrmD family. Homodimer.

It is found in the cytoplasm. It carries out the reaction guanosine(37) in tRNA + S-adenosyl-L-methionine = N(1)-methylguanosine(37) in tRNA + S-adenosyl-L-homocysteine + H(+). In terms of biological role, specifically methylates guanosine-37 in various tRNAs. The protein is tRNA (guanine-N(1)-)-methyltransferase of Bordetella pertussis (strain Tohama I / ATCC BAA-589 / NCTC 13251).